Consider the following 175-residue polypeptide: Alpha-crystallin B chain (175 aa).

Methionine 1 carries the post-translational modification N-acetylmethionine. A Phosphoserine modification is found at serine 19. Serine 41 carries O-linked (GlcNAc) serine glycosylation. Residues serine 45 and serine 59 each carry the phosphoserine modification. Residues 56–164 enclose the sHSP domain; the sequence is RAPSWIDTGL…PERTIPITRE (109 aa). Histidine 83 contributes to the Zn(2+) binding site. Position 92 is an N6-acetyllysine (lysine 92). Zn(2+)-binding residues include histidine 104, glutamate 106, histidine 111, and histidine 119. Positions 139–175 are disordered; that stretch reads SDGVLTMNGPRKQASGPERTIPITREEKPAVTAAPKK. Lysine 166 carries the post-translational modification N6-acetyllysine. An O-linked (GlcNAc) threonine glycan is attached at threonine 170.

The protein belongs to the small heat shock protein (HSP20) family. In terms of assembly, heteromer composed of three CRYAA and one CRYAB subunits. Aggregates with homologous proteins, including the small heat shock protein HSPB1, to form large heteromeric complexes. Inter-subunit bridging via zinc ions enhances stability, which is crucial as there is no protein turn over in the lens. Interacts with HSPBAP1 and TTN/titin. Interacts with TMEM109; in the cellular response to DNA damage. Interacts with DES; binds rapidly during early stages of DES filament assembly and a reduced binding seen in the later stages. Interacts with ATP6V1A and with MTOR, forming a ternary complex.

Its subcellular location is the cytoplasm. It is found in the nucleus. The protein localises to the secreted. The protein resides in the lysosome. Functionally, may contribute to the transparency and refractive index of the lens. Has chaperone-like activity, preventing aggregation of various proteins under a wide range of stress conditions. In lens epithelial cells, stabilizes the ATP6V1A protein, preventing its degradation by the proteasome. This Ovis aries (Sheep) protein is Alpha-crystallin B chain (CRYAB).